Here is a 322-residue protein sequence, read N- to C-terminus: Dioxygenase himG (322 aa).

Residues His-148 and His-229 each contribute to the Fe cation site.

It belongs to the PhyH family. In terms of assembly, homodimer. The cofactor is Fe cation.

It functions in the pathway secondary metabolite biosynthesis. Its function is as follows. Polyketide synthase-nonribosomal peptide synthetase; part of the him gene cluster that mediates the biosynthesis of himeic acid A, a ubiquitin-activating enzyme (E1) inhibitor. First, himA, together with the trans-enoyl reductase himH, catalyzes the formation of apolyketide chain, which is then condensed with leucine by the NRPS activity of himA. Dieckmann cyclization and release from himA gives a tetramic acid intermediate as the product of himA PKS-NRPS. HimG then catalyzes alpha-oxidation of the tetramic acid ring, with a subsequent rearrangement to yield apyrone intermediate. Two terminal methyl groups of polyketide and amide side chains are oxidized to carboxylic acids by himC cytochrome P450 monooxygenase to form himeic acid A. Himeic acid A is further converted to himeic acid B and C during culture growth. No gene responsible for pyrone to pyridone conversion was found in the him gene cluster and himeic acid A is non-enzymatically converted to himeic acid C by the incorporation of an ammonium nitrogen atom in a pH5 buffer, and to himeic acid B at a conversion ratio of 50% during incubation in MeOH for 5 days. The chain is Dioxygenase himG from Aspergillus japonicus.